Consider the following 355-residue polypeptide: 3-dehydroquinate synthase (355 aa).

NAD(+)-binding positions include 105–109, 129–130, lysine 142, lysine 151, and 169–172; these read GVVGD, TS, and TLKT. 3 residues coordinate Zn(2+): glutamate 184, histidine 246, and histidine 263.

This sequence belongs to the sugar phosphate cyclases superfamily. Dehydroquinate synthase family. It depends on NAD(+) as a cofactor. The cofactor is Co(2+). Zn(2+) is required as a cofactor.

The protein resides in the cytoplasm. The catalysed reaction is 7-phospho-2-dehydro-3-deoxy-D-arabino-heptonate = 3-dehydroquinate + phosphate. It functions in the pathway metabolic intermediate biosynthesis; chorismate biosynthesis; chorismate from D-erythrose 4-phosphate and phosphoenolpyruvate: step 2/7. Catalyzes the conversion of 3-deoxy-D-arabino-heptulosonate 7-phosphate (DAHP) to dehydroquinate (DHQ). This chain is 3-dehydroquinate synthase, found in Streptococcus agalactiae serotype III (strain NEM316).